Here is a 117-residue protein sequence, read N- to C-terminus: Large ribosomal subunit protein eL8 (117 aa).

It belongs to the eukaryotic ribosomal protein eL8 family. As to quaternary structure, part of the 50S ribosomal subunit. Probably part of the RNase P complex.

It localises to the cytoplasm. Multifunctional RNA-binding protein that recognizes the K-turn motif in ribosomal RNA, the RNA component of RNase P, box H/ACA, box C/D and box C'/D' sRNAs. The protein is Large ribosomal subunit protein eL8 of Methanocaldococcus jannaschii (strain ATCC 43067 / DSM 2661 / JAL-1 / JCM 10045 / NBRC 100440) (Methanococcus jannaschii).